The sequence spans 35 residues: Thionin NsW1 (35 aa).

3 disulfide bridges follow: Cys-4–Cys-32, Cys-12–Cys-30, and Cys-16–Cys-26.

Post-translationally, contains 4 disulfide bonds.

It is found in the secreted. Functionally, antimicrobial peptide disrupting membranes. Has antibacterial against Gram-positive bacteria S.aureus (MIC=6.5 uM) and B.subtilis (MIC=3.25 uM) but not against Gram-negative bacterium E.coli. Has antifungal activity against C.albicans (MIC=1.63 uM). This Nigella sativa (Black cumin) protein is Thionin NsW1.